The chain runs to 489 residues: Rhamnulokinase (489 aa).

An ATP-binding site is contributed by 13-17; that stretch reads ASSGR. Residues cysteine 68 and cysteine 222 are joined by a disulfide bond. Substrate contacts are provided by residues glycine 83 and 236–238; that span reads HDT. The active-site Proton acceptor is the aspartate 237. Threonine 259 provides a ligand contact to ATP. Asparagine 296 contributes to the substrate binding site. Glutamine 304 serves as a coordination point for ATP. Cysteines 353 and 370 form a disulfide. Residue glycine 402 participates in ATP binding. A disulfide bridge connects residues cysteine 413 and cysteine 417.

The protein belongs to the rhamnulokinase family. The cofactor is Mg(2+).

The enzyme catalyses L-rhamnulose + ATP = L-rhamnulose 1-phosphate + ADP + H(+). It participates in carbohydrate degradation; L-rhamnose degradation; glycerone phosphate from L-rhamnose: step 2/3. Its function is as follows. Involved in the catabolism of L-rhamnose (6-deoxy-L-mannose). Catalyzes the transfer of the gamma-phosphate group from ATP to the 1-hydroxyl group of L-rhamnulose to yield L-rhamnulose 1-phosphate. In Salmonella heidelberg (strain SL476), this protein is Rhamnulokinase.